Here is a 698-residue protein sequence, read N- to C-terminus: Interleukin-17 receptor C (698 aa).

The N-terminal stretch at 1 to 21 (MPVSWFLLSLALGRNPVVVSL) is a signal peptide. The Extracellular segment spans residues 22 to 464 (ERLMEPQDTA…CPMDKYIHRR (443 aa)). N182 carries N-linked (GlcNAc...) asparagine glycosylation. C190 and C202 are disulfide-bonded. N-linked (GlcNAc...) asparagine glycosylation is found at N209, N249, N255, and N259. Cystine bridges form between C266-C316, C268-C284, C325-C334, C364-C378, C406-C413, and C440-C455. Residues 465-485 (WVLVWLACLLLAAALFFFLLL) traverse the membrane as a helical segment. The Cytoplasmic segment spans residues 486 to 698 (KKDRRKAARG…WDLGPCTTLE (213 aa)). Positions 496 to 645 (SRTALLLHSA…LPSQLPAFLD (150 aa)) constitute an SEFIR domain.

As to quaternary structure, homodimer; disulfide-linked. Heterodimer with IL17RA. Heterodimerization with IL17RA is independent of the cytoplasmic tail. Associates with non-glycosylated IL17RA constitutively. Binding of IL17A and IL17F induces association with glycosylated IL17RA. Forms complexes with 2:1 binding stoichiometry: two receptor chains for one interleukin molecule. IL17A homodimer preferentially drives the formation of IL17RA-IL17RC heterodimeric receptor complex, whereas IL17F homodimer forms predominantly complexes with IL17RC homodimer. IL17A-IL17F forms complexes with IL17RA-IL17RC, but with lower affinity when compared to IL17A homodimer. IL17RC chain cannot distinguish between IL17A and IL17F molecules, potentially enabling the formation of topologically distinct complexes. Interacts (through SEFIR domain and extended downstream region) with TRAF3IP2/ACT1 (phosphorylated). As to expression, highly expressed in colonic epithelial cells. Expressed in lung epithelial cells. Expressed in macrophages. Highly expressed in B-1a B cells and at a lower extent in B-1b and B-2 B cells (at protein level).

The protein resides in the cell membrane. Receptor for IL17A and IL17F, major effector cytokines of innate and adaptive immune system involved in antimicrobial host defense and maintenance of tissue integrity. Receptor for IL17A and IL17F homodimers as part of a heterodimeric complex with IL17RA. Receptor for the heterodimer formed by IL17A and IL17B as part of a heterodimeric complex with IL17RA. Has also been shown to be the cognate receptor for IL17F and to bind IL17A with high affinity without the need for IL17RA. Upon binding of IL17F homodimer triggers downstream activation of TRAF6 and NF-kappa-B signaling pathway. Induces transcriptional activation of IL33, a potent cytokine that stimulates group 2 innate lymphoid cells and adaptive T-helper 2 cells involved in pulmonary allergic response to fungi. Promotes sympathetic innervation of peripheral organs by coordinating the communication between gamma-delta T cells and parenchymal cells. Stimulates sympathetic innervation of thermogenic adipose tissue by driving TGFB1 expression. Binding of IL17A-IL17F to IL17RA-IL17RC heterodimeric receptor complex triggers homotypic interaction of IL17RA and IL17RC chains with TRAF3IP2 adapter through SEFIR domains. This leads to downstream TRAF6-mediated activation of NF-kappa-B and MAPkinase pathways ultimately resulting in transcriptional activation of cytokines, chemokines, antimicrobial peptides and matrix metalloproteinases, with potential strong immune inflammation. Primarily induces neutrophil activation and recruitment at infection and inflammatory sites. Stimulates the production of antimicrobial beta-defensins DEFB1, DEFB103A, and DEFB104A by mucosal epithelial cells, limiting the entry of microbes through the epithelial barriers. This is Interleukin-17 receptor C (Il17rc) from Mus musculus (Mouse).